We begin with the raw amino-acid sequence, 323 residues long: ATP synthase gamma chain (323 aa).

Belongs to the ATPase gamma chain family. In terms of assembly, F-type ATPases have 2 components, CF(1) - the catalytic core - and CF(0) - the membrane proton channel. CF(1) has five subunits: alpha(3), beta(3), gamma(1), delta(1), epsilon(1). CF(0) has three main subunits: a, b and c.

The protein resides in the cell inner membrane. In terms of biological role, produces ATP from ADP in the presence of a proton gradient across the membrane. The gamma chain is believed to be important in regulating ATPase activity and the flow of protons through the CF(0) complex. The sequence is that of ATP synthase gamma chain from Rickettsia peacockii (strain Rustic).